The primary structure comprises 198 residues: MSFSPLIRQLIESLRILPGVGQKSAQRMALMLLERDRSGGLKLAQALTAAMEGVGHCRQCRTLSEEELCPQCADPRRDDSLLCVVEGPLDVFAVEQTGYRGRYFVLKGHLSPLDGLGPEAIGIPELDARIRDGAFSEVILATNPTVEGEATAHYIAQLLADRGLTLSRIAHGVPLGGELELVDGGTLAHALAGRRPIS.

Residues 57-72 (CRQCRTLSEEELCPQC) form a C4-type zinc finger. The 95-residue stretch at 80–174 (SLLCVVEGPL…TLSRIAHGVP (95 aa)) folds into the Toprim domain.

It belongs to the RecR family.

In terms of biological role, may play a role in DNA repair. It seems to be involved in an RecBC-independent recombinational process of DNA repair. It may act with RecF and RecO. This is Recombination protein RecR from Pseudomonas paraeruginosa (strain DSM 24068 / PA7) (Pseudomonas aeruginosa (strain PA7)).